Reading from the N-terminus, the 291-residue chain is tRNA U34 carboxymethyltransferase (291 aa).

Carboxy-S-adenosyl-L-methionine-binding positions include lysine 61, tryptophan 75, lysine 80, glycine 100, 122-124, tyrosine 169, and arginine 284; that span reads DPS.

The protein belongs to the class I-like SAM-binding methyltransferase superfamily. CmoB family. As to quaternary structure, homotetramer.

It catalyses the reaction carboxy-S-adenosyl-L-methionine + 5-hydroxyuridine(34) in tRNA = 5-carboxymethoxyuridine(34) in tRNA + S-adenosyl-L-homocysteine + H(+). Its function is as follows. Catalyzes carboxymethyl transfer from carboxy-S-adenosyl-L-methionine (Cx-SAM) to 5-hydroxyuridine (ho5U) to form 5-carboxymethoxyuridine (cmo5U) at position 34 in tRNAs. The chain is tRNA U34 carboxymethyltransferase from Campylobacter lari (strain RM2100 / D67 / ATCC BAA-1060).